The sequence spans 127 residues: Protein yippee-like 4 (127 aa).

The region spanning 27-124 (RTYSCVHCRA…IEMSHMVKDN (98 aa)) is the Yippee domain. The Zn(2+) site is built by C31, C34, C87, and C90. Phosphothreonine occurs at positions 92 and 93. A Phosphotyrosine modification is found at Y98.

It belongs to the yippee family. As to expression, detected in brain, spleen and testis.

It localises to the nucleus. Its subcellular location is the nucleolus. In Mus musculus (Mouse), this protein is Protein yippee-like 4 (Ypel4).